We begin with the raw amino-acid sequence, 369 residues long: Sesquiterpene cyclase hepA (369 aa).

Positions 100, 248, 252, and 256 each coordinate Mg(2+). A DDXXD motif motif is present at residues 100-104; it reads DDEID. Residues 255–262 carry the (N,D)D(L,I,V)X(S,T)XXXE motif motif; the sequence is NDLLSLRK.

It belongs to the terpene synthase family. Mg(2+) is required as a cofactor.

Functionally, sesquiterpene cyclase; part of the gene cluster that mediates the biosynthesis of heptelidic acid (HA), a sesquiterpene lactone that acts as an inhibitor of glyceraldehyde-3-phosphatedehydrogenase (GAPDH) and a growth inhibitor of the salt-tolerant lactic acid bacteria in soy sauce brewing. The chain is Sesquiterpene cyclase hepA from Aspergillus oryzae (strain ATCC 42149 / RIB 40) (Yellow koji mold).